Here is a 314-residue protein sequence, read N- to C-terminus: DNA-directed RNA polymerase subunit alpha (314 aa).

The alpha N-terminal domain (alpha-NTD) stretch occupies residues 1 to 228 (MIEIEKPKIE…EHLNIFVGLT (228 aa)). The segment at 245–314 (KEKVLEMTIE…ELGLGLRKDD (70 aa)) is alpha C-terminal domain (alpha-CTD).

This sequence belongs to the RNA polymerase alpha chain family. In terms of assembly, homodimer. The RNAP catalytic core consists of 2 alpha, 1 beta, 1 beta' and 1 omega subunit. When a sigma factor is associated with the core the holoenzyme is formed, which can initiate transcription.

It carries out the reaction RNA(n) + a ribonucleoside 5'-triphosphate = RNA(n+1) + diphosphate. Functionally, DNA-dependent RNA polymerase catalyzes the transcription of DNA into RNA using the four ribonucleoside triphosphates as substrates. This is DNA-directed RNA polymerase subunit alpha from Bacillus thuringiensis (strain Al Hakam).